The sequence spans 255 residues: Indole-3-glycerol phosphate synthase (255 aa).

Belongs to the TrpC family.

The catalysed reaction is 1-(2-carboxyphenylamino)-1-deoxy-D-ribulose 5-phosphate + H(+) = (1S,2R)-1-C-(indol-3-yl)glycerol 3-phosphate + CO2 + H2O. It functions in the pathway amino-acid biosynthesis; L-tryptophan biosynthesis; L-tryptophan from chorismate: step 4/5. The chain is Indole-3-glycerol phosphate synthase from Streptococcus pneumoniae serotype 2 (strain D39 / NCTC 7466).